The sequence spans 156 residues: Sec-independent protein translocase protein TatB (156 aa).

Residues 2–22 (FSSVGWGEIFLLVVVGLVVIG) form a helical membrane-spanning segment. The interval 100–156 (KIMAEGTEGEAQRNKQAADNNANVVERPADGSTARPTQNDPKDGPNYSGGVSWTDII) is disordered. The span at 113 to 122 (NKQAADNNAN) shows a compositional bias: polar residues.

It belongs to the TatB family. The Tat system comprises two distinct complexes: a TatABC complex, containing multiple copies of TatA, TatB and TatC subunits, and a separate TatA complex, containing only TatA subunits. Substrates initially bind to the TatABC complex, which probably triggers association of the separate TatA complex to form the active translocon.

It is found in the cell membrane. Its function is as follows. Part of the twin-arginine translocation (Tat) system that transports large folded proteins containing a characteristic twin-arginine motif in their signal peptide across membranes. Together with TatC, TatB is part of a receptor directly interacting with Tat signal peptides. TatB may form an oligomeric binding site that transiently accommodates folded Tat precursor proteins before their translocation. This chain is Sec-independent protein translocase protein TatB, found in Corynebacterium glutamicum (strain ATCC 13032 / DSM 20300 / JCM 1318 / BCRC 11384 / CCUG 27702 / LMG 3730 / NBRC 12168 / NCIMB 10025 / NRRL B-2784 / 534).